A 499-amino-acid polypeptide reads, in one-letter code: Lysine--tRNA ligase (499 aa).

Glutamate 403 and glutamate 410 together coordinate Mg(2+).

Belongs to the class-II aminoacyl-tRNA synthetase family. In terms of assembly, homodimer. Mg(2+) serves as cofactor.

The protein resides in the cytoplasm. It carries out the reaction tRNA(Lys) + L-lysine + ATP = L-lysyl-tRNA(Lys) + AMP + diphosphate. The polypeptide is Lysine--tRNA ligase (Campylobacter hominis (strain ATCC BAA-381 / DSM 21671 / CCUG 45161 / LMG 19568 / NCTC 13146 / CH001A)).